Consider the following 557-residue polypeptide: Glucose-6-phosphate isomerase (557 aa).

The active-site Proton donor is Glu361. Catalysis depends on residues His392 and Lys520.

It belongs to the GPI family.

The protein localises to the cytoplasm. It carries out the reaction alpha-D-glucose 6-phosphate = beta-D-fructose 6-phosphate. It functions in the pathway carbohydrate biosynthesis; gluconeogenesis. Its pathway is carbohydrate degradation; glycolysis; D-glyceraldehyde 3-phosphate and glycerone phosphate from D-glucose: step 2/4. Functionally, catalyzes the reversible isomerization of glucose-6-phosphate to fructose-6-phosphate. The protein is Glucose-6-phosphate isomerase of Acinetobacter venetianus (strain ATCC 31012 / DSM 23050 / BCRC 14357 / CCUG 45561 / CIP 110063 / KCTC 2702 / LMG 19082 / RAG-1).